A 439-amino-acid polypeptide reads, in one-letter code: Protein translocase subunit SecY (439 aa).

A run of 10 helical transmembrane segments spans residues 19–39 (ILFTIFILFVFRLGAHITVPG), 68–88 (YSLFAMGVSPYITASIIVQLL), 116–136 (YITLVLAMAQSIGITAGFQAM), 151–171 (LMIGAILTTGSMVVTWMGEQI), 176–196 (FGSGVSVIIFAGIVSSIPSAV), 216–236 (WLFVIGLVLSAIIIIYVTTFV), 269–289 (VIPVIFAGSITTAPATILQFL), 312–332 (WTGMLFYALLIVLFTFFYSFV), 373–393 (VGALFLGLISIIPIAAQNVWG), and 396–416 (KIVALGGTSLLILIQVAIQAV).

It belongs to the SecY/SEC61-alpha family. In terms of assembly, component of the Sec protein translocase complex. Heterotrimer consisting of SecY, SecE and SecG subunits. The heterotrimers can form oligomers, although 1 heterotrimer is thought to be able to translocate proteins. Interacts with the ribosome. Interacts with SecDF, and other proteins may be involved. Interacts with SecA.

The protein resides in the cell membrane. Its function is as follows. The central subunit of the protein translocation channel SecYEG. Consists of two halves formed by TMs 1-5 and 6-10. These two domains form a lateral gate at the front which open onto the bilayer between TMs 2 and 7, and are clamped together by SecE at the back. The channel is closed by both a pore ring composed of hydrophobic SecY resides and a short helix (helix 2A) on the extracellular side of the membrane which forms a plug. The plug probably moves laterally to allow the channel to open. The ring and the pore may move independently. This is Protein translocase subunit SecY from Lactococcus lactis subsp. lactis (strain IL1403) (Streptococcus lactis).